The following is a 578-amino-acid chain: A-type ATP synthase subunit A (578 aa).

228–235 serves as a coordination point for ATP; the sequence is GPFGSGKT.

Belongs to the ATPase alpha/beta chains family. As to quaternary structure, has multiple subunits with at least A(3), B(3), C, D, E, F, H, I and proteolipid K(x).

The protein resides in the cell membrane. The catalysed reaction is ATP + H2O + 4 H(+)(in) = ADP + phosphate + 5 H(+)(out). Produces ATP from ADP in the presence of a proton gradient across the membrane. The archaeal alpha chain is a catalytic subunit. Functionally, component of the A-type ATP synthase that produces ATP from ADP in the presence of a proton gradient across the membrane. The A chain is the catalytic subunit. This is A-type ATP synthase subunit A from Methanosarcina barkeri.